Reading from the N-terminus, the 339-residue chain is MTVAKSTCASVSTKPAVGKPTNGIATYSPAYTIVPTYECFNRCTYCNFRTDPGESSWMTLSAAEDIFQRLQNEQVCEILILSGEVHPHSPKRQAWFQRIYDLCKLALTSGFLPHTNAGPLSFAEMQELKSVNVSMGLMLEQLTPKLLETVHRHAPSKLPELRLQQLEWAGDLQIPFTTGLLLGIGEGIDDCWETLETISKLHQRYHHIQEVILQPHSPGNQQTFDAPAFNPHQLPEVIAKARQILPPDITIQIPPNLVQDEQWLVACVEAGARDLGGIGPKDEVNPDYPHLQAEELREILQPVGWELVPRLPVYPQFDGWLSKELQASVRRWRELVIYF.

The 232-residue stretch at 25–256 folds into the Radical SAM core domain; it reads ATYSPAYTIV…PDITIQIPPN (232 aa). [4Fe-4S] cluster contacts are provided by cysteine 39, cysteine 43, and cysteine 46.

This sequence belongs to the radical SAM superfamily. CofG family. In terms of assembly, consists of two subunits, CofG and CofH. It depends on [4Fe-4S] cluster as a cofactor.

The catalysed reaction is 5-amino-5-(4-hydroxybenzyl)-6-(D-ribitylimino)-5,6-dihydrouracil + S-adenosyl-L-methionine = 7,8-didemethyl-8-hydroxy-5-deazariboflavin + 5'-deoxyadenosine + L-methionine + NH4(+) + H(+). It participates in cofactor biosynthesis; coenzyme F0 biosynthesis. Catalyzes the radical-mediated synthesis of 7,8-didemethyl-8-hydroxy-5-deazariboflavin from 5-amino-5-(4-hydroxybenzyl)-6-(D-ribitylimino)-5,6-dihydrouracil. The sequence is that of 7,8-didemethyl-8-hydroxy-5-deazariboflavin synthase from Nostoc sp. (strain PCC 7120 / SAG 25.82 / UTEX 2576).